We begin with the raw amino-acid sequence, 168 residues long: Shikimate kinase (168 aa).

Cys-10–Thr-15 provides a ligand contact to ATP. Position 14 (Ser-14) interacts with Mg(2+). 3 residues coordinate substrate: Asp-32, Arg-56, and Gly-78. Residue Arg-116 coordinates ATP. A substrate-binding site is contributed by Arg-133.

This sequence belongs to the shikimate kinase family. As to quaternary structure, monomer. Mg(2+) serves as cofactor.

The protein localises to the cytoplasm. It catalyses the reaction shikimate + ATP = 3-phosphoshikimate + ADP + H(+). It participates in metabolic intermediate biosynthesis; chorismate biosynthesis; chorismate from D-erythrose 4-phosphate and phosphoenolpyruvate: step 5/7. Functionally, catalyzes the specific phosphorylation of the 3-hydroxyl group of shikimic acid using ATP as a cosubstrate. The protein is Shikimate kinase of Aquifex aeolicus (strain VF5).